The chain runs to 966 residues: Calsyntenin-2 (966 aa).

The signal sequence occupies residues 1–20; sequence MLPGRLCLVPLLLALGVGSG. Topologically, residues 21-835 are extracellular; that stretch reads GGSGDGGDSR…SIQRSSVVPS (815 aa). Cadherin domains lie at 46-162 and 163-282; these read IETS…APTF and KEPA…MPLF. Asn-58 and Asn-100 each carry an N-linked (GlcNAc...) asparagine glycan. N-linked (GlcNAc...) asparagine glycosylation is found at Asn-344, Asn-376, Asn-720, and Asn-733. Residues 836-856 form a helical membrane-spanning segment; the sequence is IATVVIIISVCMLVFVVAMGV. Residues 857–966 lie on the Cytoplasmic side of the membrane; sequence YRVRIAHQHF…NTAGVINIWK (110 aa). Residues 890–966 are disordered; that stretch reads NPMEKHEGPG…NTAGVINIWK (77 aa). The segment covering 901–916 has biased composition (acidic residues); the sequence is GEDETTEVEEEEEAEE. Positions 943-960 are enriched in polar residues; sequence QSGTSSQSPERSTWNTAG.

The protein belongs to the calsyntenin family. Proteolytically processed under normal cellular conditions. A primary zeta-cleavage generates a large extracellular (soluble) N-terminal domain (sAlc) and a short C-terminal transmembrane fragment (CTF1). A secondary cleavage catalyzed by gamma-secretase within the transmembrane domain releases the beta-Alc-gamma chain in the extracellular milieu and produces an intracellular fragment (AlcICD). This processing is strongly suppressed in the tripartite complex formed with APBA2 and APP, which seems to prevent the association with PSEN1. In terms of tissue distribution, restricted to the brain. In the cerebral cortex, found in the somas and neuropil of all layers. Expressed at highest levels in neurons of cortical layers 5 and 6 and, at lower levels, in neurons of the upper layers. Highly expressed in Purkinje cells. Also found in a few scattered interneurons throughout the granule cell layer and occasionally in neurons in the molecular layer (at protein level). Present throughout all cortical layers, highest levels in GABAergic neurons (based on morphology and distribution pattern).

It localises to the postsynaptic cell membrane. The protein resides in the endoplasmic reticulum membrane. Its subcellular location is the golgi apparatus membrane. The protein localises to the cell projection. It is found in the dendrite. Postsynaptic adhesion molecule that binds to presynaptic neurexins to mediate synapse formation, and which is involved in learning and memory. Promotes synapse development by acting as a cell adhesion molecule at the postsynaptic membrane, which associates with neurexin-alpha at the presynaptic membrane. The chain is Calsyntenin-2 from Mus musculus (Mouse).